The following is a 159-amino-acid chain: Transcription elongation factor GreA (159 aa).

This sequence belongs to the GreA/GreB family.

Necessary for efficient RNA polymerase transcription elongation past template-encoded arresting sites. The arresting sites in DNA have the property of trapping a certain fraction of elongating RNA polymerases that pass through, resulting in locked ternary complexes. Cleavage of the nascent transcript by cleavage factors such as GreA or GreB allows the resumption of elongation from the new 3'terminus. GreA releases sequences of 2 to 3 nucleotides. This chain is Transcription elongation factor GreA, found in Orientia tsutsugamushi (strain Ikeda) (Rickettsia tsutsugamushi).